The chain runs to 225 residues: MKLFVGLGNPGARYAGNRHNIGYMAVEAIASAHGFGPWRSRFQGVTSEGRLGAEQVLLLKPETFMNLSGQSVGEAMRFYKLSPADLTVFHDELDLAPGRLRLKQGGGHAGHNGLRSIHAHVGEAYGRVRLGIGHPGHKDAVASYVLNDFAKADQGWLEDLLRGIADGAEALARGDGARFQNAVALRMQPPKPEKPKGEAKPAAPEAPEAAPDTRSALQRLADRFR.

Tyr-14 contributes to the tRNA binding site. His-19 functions as the Proton acceptor in the catalytic mechanism. Residues Phe-64, Asn-66, and Asn-112 each contribute to the tRNA site. The tract at residues 187–225 (MQPPKPEKPKGEAKPAAPEAPEAAPDTRSALQRLADRFR) is disordered. Residues 200–210 (KPAAPEAPEAA) are compositionally biased toward low complexity.

It belongs to the PTH family. As to quaternary structure, monomer.

The protein resides in the cytoplasm. The enzyme catalyses an N-acyl-L-alpha-aminoacyl-tRNA + H2O = an N-acyl-L-amino acid + a tRNA + H(+). Its function is as follows. Hydrolyzes ribosome-free peptidyl-tRNAs (with 1 or more amino acids incorporated), which drop off the ribosome during protein synthesis, or as a result of ribosome stalling. Catalyzes the release of premature peptidyl moieties from peptidyl-tRNA molecules trapped in stalled 50S ribosomal subunits, and thus maintains levels of free tRNAs and 50S ribosomes. The chain is Peptidyl-tRNA hydrolase from Cereibacter sphaeroides (strain ATCC 17025 / ATH 2.4.3) (Rhodobacter sphaeroides).